Reading from the N-terminus, the 314-residue chain is Ribosomal protein L11 methyltransferase (314 aa).

Thr-161, Gly-182, Asp-204, and Asn-248 together coordinate S-adenosyl-L-methionine.

Belongs to the methyltransferase superfamily. PrmA family.

It is found in the cytoplasm. The catalysed reaction is L-lysyl-[protein] + 3 S-adenosyl-L-methionine = N(6),N(6),N(6)-trimethyl-L-lysyl-[protein] + 3 S-adenosyl-L-homocysteine + 3 H(+). In terms of biological role, methylates ribosomal protein L11. The sequence is that of Ribosomal protein L11 methyltransferase from Listeria monocytogenes serotype 1/2a (strain 10403S).